The chain runs to 102 residues: Cytochrome b (102 aa).

Transmembrane regions (helical) follow at residues 1 to 21 (FGSL…FLAM), 45 to 66 (WLIR…YLHI), and 81 to 101 (WNIG…GYVL). Positions 51 and 65 each coordinate heme b.

The protein belongs to the cytochrome b family. In terms of assembly, the cytochrome bc1 complex contains 3 respiratory subunits (MT-CYB, CYC1 and UQCRFS1), 2 core proteins (UQCRC1 and UQCRC2) and probably 6 low-molecular weight proteins. It depends on heme b as a cofactor.

Its subcellular location is the mitochondrion inner membrane. Component of the ubiquinol-cytochrome c reductase complex (complex III or cytochrome b-c1 complex) that is part of the mitochondrial respiratory chain. The b-c1 complex mediates electron transfer from ubiquinol to cytochrome c. Contributes to the generation of a proton gradient across the mitochondrial membrane that is then used for ATP synthesis. The chain is Cytochrome b (mt-cyb) from Megalops atlanticus (Tarpon).